We begin with the raw amino-acid sequence, 158 residues long: MQGRLSAWLVKHGLIHRSLGFDYQGIETLQIKPEDWHSIAVIFYVYGYNYLRSQCAYDVAPGGLLASVYHLTRIEDGVDQPEELCIKVFASRRNPRIPSVFWVWKSVDFQERESYDMLGISYDNHPRLKRILMPESWIGWPLRKDYIAPNFYEIQEAH.

This sequence belongs to the complex I 30 kDa subunit family. NDH is composed of at least 16 different subunits, 5 of which are encoded in the nucleus.

Its subcellular location is the plastid. It localises to the chloroplast thylakoid membrane. It catalyses the reaction a plastoquinone + NADH + (n+1) H(+)(in) = a plastoquinol + NAD(+) + n H(+)(out). The enzyme catalyses a plastoquinone + NADPH + (n+1) H(+)(in) = a plastoquinol + NADP(+) + n H(+)(out). NDH shuttles electrons from NAD(P)H:plastoquinone, via FMN and iron-sulfur (Fe-S) centers, to quinones in the photosynthetic chain and possibly in a chloroplast respiratory chain. The immediate electron acceptor for the enzyme in this species is believed to be plastoquinone. Couples the redox reaction to proton translocation, and thus conserves the redox energy in a proton gradient. In Solanum bulbocastanum (Wild potato), this protein is NAD(P)H-quinone oxidoreductase subunit J, chloroplastic.